The primary structure comprises 210 residues: Na(+)-translocating NADH-quinone reductase subunit D (210 aa).

5 helical membrane passes run 42–62, 72–92, 103–123, 131–151, and 178–198; these read FVMT…ISLI, IIAQ…VLKA, VFVG…AYAM, FLDG…VATV, and NGLL…IWGV.

It belongs to the NqrDE/RnfAE family. In terms of assembly, composed of six subunits; NqrA, NqrB, NqrC, NqrD, NqrE and NqrF.

Its subcellular location is the cell inner membrane. It carries out the reaction a ubiquinone + n Na(+)(in) + NADH + H(+) = a ubiquinol + n Na(+)(out) + NAD(+). Functionally, NQR complex catalyzes the reduction of ubiquinone-1 to ubiquinol by two successive reactions, coupled with the transport of Na(+) ions from the cytoplasm to the periplasm. NqrA to NqrE are probably involved in the second step, the conversion of ubisemiquinone to ubiquinol. This Aeromonas salmonicida (strain A449) protein is Na(+)-translocating NADH-quinone reductase subunit D.